The primary structure comprises 575 residues: Glycosyltransferase family 92 protein At1g27200 (575 aa).

The helical transmembrane segment at 22-44 threads the bilayer; sequence FLSQRYLILCFCCFFVLLFFLSS. Residues 293–540 form the GT92 domain; it reads LCVCTMLWNQ…TEAIEPPDWK (248 aa).

This sequence belongs to the glycosyltransferase 92 family.

Its subcellular location is the membrane. The polypeptide is Glycosyltransferase family 92 protein At1g27200 (Arabidopsis thaliana (Mouse-ear cress)).